Here is a 344-residue protein sequence, read N- to C-terminus: Rho guanine nucleotide exchange factor 39 (344 aa).

Residues 22–197 enclose the DH domain; the sequence is KRVCTARELL…SETAQKVHAI (176 aa). Residues 227–331 form the PH domain; it reads WFLRQGWLLV…WHHSLTLAIR (105 aa).

It is found in the cell membrane. In terms of biological role, promotes cell proliferation. In Mus musculus (Mouse), this protein is Rho guanine nucleotide exchange factor 39 (Arhgef39).